The sequence spans 479 residues: F-box/LRR-repeat protein 16 (479 aa).

The interval 1-92 is disordered; it reads MSSPGIDGDP…GPVSGPPVER (92 aa). The segment covering 47-60 has biased composition (pro residues); it reads CQPPPPPTLPPPSL. Position 92 is an omega-N-methylarginine (R92). The F-box domain occupies 94–139; that stretch reads PLATDEKILNGLFWYFSACEKCILAQVCKAWRRVLYQPKFWAGLTP. 6 LRR repeats span residues 321-342, 347-369, 373-394, 398-419, 423-444, and 446-470; these read NLTS…ELVA, KLRS…YVAC, RLEE…SYLS, SLRS…KHLL, NLRL…SGLV, and LQEL…YFSQ.

In terms of assembly, interacts with SKP1 and CUL1.

Functionally, substrate-recognition component of the SCF (SKP1-CUL1-F-box protein)-type E3 ubiquitin ligase complex. The polypeptide is F-box/LRR-repeat protein 16 (Fbxl16) (Mus musculus (Mouse)).